A 435-amino-acid polypeptide reads, in one-letter code: Adenylosuccinate synthetase (435 aa).

Residues 11–17 (GDEGKGK) and 39–41 (GHT) each bind GTP. Asp12 functions as the Proton acceptor in the catalytic mechanism. Mg(2+) is bound by residues Asp12 and Gly39. IMP is bound by residues 12-15 (DEGK), 37-40 (NAGH), Thr128, Arg142, Gln223, Thr238, and Arg302. The active-site Proton donor is the His40. 298 to 304 (SVTGRPR) contacts substrate. GTP is bound by residues Arg304, 330-332 (KLD), and 412-414 (STG).

The protein belongs to the adenylosuccinate synthetase family. Homodimer. Mg(2+) is required as a cofactor.

Its subcellular location is the cytoplasm. The enzyme catalyses IMP + L-aspartate + GTP = N(6)-(1,2-dicarboxyethyl)-AMP + GDP + phosphate + 2 H(+). It functions in the pathway purine metabolism; AMP biosynthesis via de novo pathway; AMP from IMP: step 1/2. In terms of biological role, plays an important role in the de novo pathway of purine nucleotide biosynthesis. Catalyzes the first committed step in the biosynthesis of AMP from IMP. This chain is Adenylosuccinate synthetase, found in Coxiella burnetii (strain RSA 493 / Nine Mile phase I).